Consider the following 301-residue polypeptide: Probable serine acetyltransferase 3 (301 aa).

The tract at residues 280 to 301 is disordered; the sequence is IGKKAEPQRELPGVTMEQRWSD.

Belongs to the transferase hexapeptide repeat family. Homomultimer.

It carries out the reaction L-serine + acetyl-CoA = O-acetyl-L-serine + CoA. It functions in the pathway amino-acid biosynthesis; L-cysteine biosynthesis; L-cysteine from L-serine: step 1/2. The polypeptide is Probable serine acetyltransferase 3 (SAT3) (Oryza sativa subsp. japonica (Rice)).